The sequence spans 951 residues: Spliceosome associated factor 3, U4/U6 recycling protein (951 aa).

The disordered stretch occupies residues 1–58 (MAATGNEEQTLLPDIEEEAEGMEREMESEDDEEEGMGVEHSEEEDEEDTSEDERENEA). Residues 14–56 (DIEEEAEGMEREMESEDDEEEGMGVEHSEEEDEEDTSEDEREN) are compositionally biased toward acidic residues. 8 HAT repeats span residues 88-120 (GKLHRLRKARQKMSELFPLTEEIWLDWLKDEIR), 126-157 (SDREKVYELFERAIKDYVCPEIWLEYVQYSIG), 163-199 (GGIERVRSIFERALTAVGLHMTKGASIWEAYREFEIV), 222-255 (AQLERIHTLFRRQLAVPLMDMEGTYAEYSDWADD), 304-336 (GDPARVQIIFERALAENCLVPDLWIKYTTYLDR), 339-371 (KIKDLVLSAHERAVRNCPWTMGLWKSYLLALER), 374-410 (ADHQTVKDVFEKALNAGFIQATDYVEIWQSYLDYLRR), and 467-500 (KNMQKARELWDSIMTKGNAKYANMWLEYYNLERS). The necessary and sufficient for U6 snRNA binding stretch occupies residues 517–941 (CTSDYPEHVC…LDTQTKSLSN (425 aa)). The stretch at 533–593 (ERVEGSLEDW…VKADKKAQKK (61 aa)) forms a coiled coil. Residues 567 to 581 (EALHARQEEEKAEQR) show a composition bias toward basic and acidic residues. Positions 567–686 (EALHARQEEE…HDMPKEQRKD (120 aa)) are disordered. Residues 582 to 596 (RKVKADKKAQKKGQK) are compositionally biased toward basic residues. The span at 608-619 (DDDEEEWGEEAE) shows a compositional bias: acidic residues. The span at 674–686 (RQPHDMPKEQRKD) shows a compositional bias: basic and acidic residues. 2 RRM domains span residues 688–766 (NCVF…PCVD) and 785–862 (HKIF…ISNP). The segment at 905-938 (RQSTPDAKAENGTISAPHATVTDGETSLDTQTKS) is disordered. The segment covering 927 to 938 (DGETSLDTQTKS) has biased composition (polar residues).

The protein resides in the nucleus. It is found in the nucleoplasm. It localises to the cajal body. The protein localises to the nucleus speckle. Its subcellular location is the cytoplasm. Functionally, U6 snRNP-binding protein that functions as a recycling factor of the splicing machinery. Promotes the initial reassembly of U4 and U6 snRNPs following their ejection from the spliceosome during its maturation. May also function as a substrate targeting factor for deubiquitinases and mediate the deubiquitination of components of the spliceosome and histones. This is Spliceosome associated factor 3, U4/U6 recycling protein from Danio rerio (Zebrafish).